The following is a 342-amino-acid chain: MSEAIKTDVLIIGAGPCGLFAVFELGLLDMKVHLVDILDKIGGQCAELYPEKPIYDIPGIPFVTGQGLTEALLEQIKPFNPNFHLNEMVESIEKIGDPGFRVTTDAGKVFECKIVVVSAGGGSFQPKRPPVPGIEAYENTSVFYAVRKMEQFRDREILIVGGGDSALDWTLNLHPLAKRITLLHRRDDFRAAPHSVEQMRKLVADGKMDLKIGQVTALEGADGQLSGAQVKGSDNAMSTVSCDTMLPFFGLTMKLGPVANWGLQLENNLVPVETASFETNVPGIFAIGDINTYPGKLKLILSGFHEGALMAQKAHRYVYPDKRLVFQYTTSSSSLQKKLGVN.

Residues C17, D36, Q44, Y49, V89, F124, D289, and T330 each contribute to the FAD site.

This sequence belongs to the ferredoxin--NADP reductase type 2 family. In terms of assembly, homodimer. The cofactor is FAD.

The catalysed reaction is 2 reduced [2Fe-2S]-[ferredoxin] + NADP(+) + H(+) = 2 oxidized [2Fe-2S]-[ferredoxin] + NADPH. The polypeptide is Ferredoxin--NADP reductase (Nitrobacter hamburgensis (strain DSM 10229 / NCIMB 13809 / X14)).